Reading from the N-terminus, the 260-residue chain is NADH-ubiquinone oxidoreductase chain 6 (260 aa).

Helical transmembrane passes span 2 to 22 (LTNY…FMII), 30 to 50 (SILY…ILGV), 52 to 72 (FIAI…FLFV), 101 to 121 (FLFQ…FGLF), 142 to 162 (VPSG…NLGI), and 211 to 231 (FFIF…SIIL).

Belongs to the complex I subunit 6 family.

It is found in the mitochondrion membrane. The enzyme catalyses a ubiquinone + NADH + 5 H(+)(in) = a ubiquinol + NAD(+) + 4 H(+)(out). Functionally, core subunit of the mitochondrial membrane respiratory chain NADH dehydrogenase (Complex I) that is believed to belong to the minimal assembly required for catalysis. Complex I functions in the transfer of electrons from NADH to the respiratory chain. The immediate electron acceptor for the enzyme is believed to be ubiquinone. The polypeptide is NADH-ubiquinone oxidoreductase chain 6 (ND6) (Acanthamoeba castellanii (Amoeba)).